A 156-amino-acid chain; its full sequence is Endoribonuclease YbeY (156 aa).

The Zn(2+) site is built by His-117, His-121, and His-127.

Belongs to the endoribonuclease YbeY family. Requires Zn(2+) as cofactor.

The protein localises to the cytoplasm. Single strand-specific metallo-endoribonuclease involved in late-stage 70S ribosome quality control and in maturation of the 3' terminus of the 16S rRNA. This is Endoribonuclease YbeY from Shewanella piezotolerans (strain WP3 / JCM 13877).